The primary structure comprises 257 residues: Glutamate racemase (257 aa).

Substrate is bound by residues D12–S13 and Y44–G45. The Proton donor/acceptor role is filled by C75. N76–T77 is a substrate binding site. C186 serves as the catalytic Proton donor/acceptor. Position 187-188 (T187–H188) interacts with substrate.

The protein belongs to the aspartate/glutamate racemases family.

It carries out the reaction L-glutamate = D-glutamate. The protein operates within cell wall biogenesis; peptidoglycan biosynthesis. Provides the (R)-glutamate required for cell wall biosynthesis. The polypeptide is Glutamate racemase (Clostridium kluyveri (strain NBRC 12016)).